A 234-amino-acid polypeptide reads, in one-letter code: Orotidine 5'-phosphate decarboxylase (234 aa).

Residues aspartate 17, lysine 38, 65 to 74, threonine 122, arginine 184, glutamine 193, glycine 213, and arginine 214 contribute to the substrate site; that span reads DLKLHDIPNT. The active-site Proton donor is the lysine 67.

Belongs to the OMP decarboxylase family. Type 1 subfamily. In terms of assembly, homodimer.

It catalyses the reaction orotidine 5'-phosphate + H(+) = UMP + CO2. Its pathway is pyrimidine metabolism; UMP biosynthesis via de novo pathway; UMP from orotate: step 2/2. Catalyzes the decarboxylation of orotidine 5'-monophosphate (OMP) to uridine 5'-monophosphate (UMP). The chain is Orotidine 5'-phosphate decarboxylase from Thermosynechococcus vestitus (strain NIES-2133 / IAM M-273 / BP-1).